Reading from the N-terminus, the 361-residue chain is Dynein axonemal assembly factor 8 (361 aa).

Disordered stretches follow at residues 65–191 and 309–334; these read DPAG…ERRK and AQPG…RRPL. Residues 136–157 are compositionally biased toward polar residues; it reads TLNTSASQSPRQGPQGEATRSP. Phosphoserine is present on residues Ser142 and Ser144. The segment covering 321–334 has biased composition (low complexity); the sequence is GSSSSSGHLGRRPL.

Its subcellular location is the dynein axonemal particle. It localises to the cytoplasm. Functionally, in cyliated cells, dynein axonemal particle-specific protein required for deployment of ODA to the axoneme. Interacts with outer dynein arm (ODA) subunits. This chain is Dynein axonemal assembly factor 8 (DNAAF8), found in Bos taurus (Bovine).